Consider the following 405-residue polypeptide: MIRSILDNDLYKFTMQMAVLELFPNARAEYRFINRGAQSFTNDFVNELRRIINKDISKIALSEDEYIWLKDNCPFFKPSYIEYLKNFRFNPEEVKIVLTEDNELELCIEGPWHSSILWEIVLMSTISELYFTVTDNKGEEISASNANDPENTLMEEYSSFIGDMGKELDAKGCIFSEFGTRRRRGFKLHDKVVEVLHELDSFSGTSNVYFAKKYGVRPIGTIGHEWIMGNSALVGLRNANKFAFDNWVKVYKGDLSIALSDTFGSKPFFQNFSIGLAKIYDGVRHDSGDPIKFADEVIEHYKKLGIDPMKKVLVFSDSLHVSDAVKLKEYCSGRINCSFGIGTTLTNNPDFFSYNPPLNMVIKLHKIDGIPVVKLSDSVEKATGDKDALRVANYIFGRKGLDEQF.

His-224 is modified (phosphohistidine; by autocatalysis).

The protein belongs to the NAPRTase family. Post-translationally, transiently phosphorylated on a His residue during the reaction cycle. Phosphorylation strongly increases the affinity for substrates and increases the rate of nicotinate D-ribonucleotide production. Dephosphorylation regenerates the low-affinity form of the enzyme, leading to product release.

It catalyses the reaction nicotinate + 5-phospho-alpha-D-ribose 1-diphosphate + ATP + H2O = nicotinate beta-D-ribonucleotide + ADP + phosphate + diphosphate. It functions in the pathway cofactor biosynthesis; NAD(+) biosynthesis; nicotinate D-ribonucleotide from nicotinate: step 1/1. Functionally, catalyzes the synthesis of beta-nicotinate D-ribonucleotide from nicotinate and 5-phospho-D-ribose 1-phosphate at the expense of ATP. The protein is Nicotinate phosphoribosyltransferase of Methanococcoides burtonii (strain DSM 6242 / NBRC 107633 / OCM 468 / ACE-M).